Reading from the N-terminus, the 177-residue chain is Dual-action ribosomal maturation protein DarP (177 aa).

This sequence belongs to the DarP family.

Its subcellular location is the cytoplasm. In terms of biological role, member of a network of 50S ribosomal subunit biogenesis factors which assembles along the 30S-50S interface, preventing incorrect 23S rRNA structures from forming. Promotes peptidyl transferase center (PTC) maturation. This is Dual-action ribosomal maturation protein DarP from Histophilus somni (strain 129Pt) (Haemophilus somnus).